A 43-amino-acid chain; its full sequence is Photosystem I reaction center subunit IX (43 aa).

A helical transmembrane segment spans residues 7–27 (YLSVAPVLSTLWFGSLAGLLI).

This sequence belongs to the PsaJ family.

The protein localises to the plastid. It localises to the chloroplast thylakoid membrane. Its function is as follows. May help in the organization of the PsaE and PsaF subunits. The chain is Photosystem I reaction center subunit IX from Aethionema cordifolium (Lebanon stonecress).